The following is a 614-amino-acid chain: Two-component response regulator ORR33 (614 aa).

The Response regulatory domain maps to 14-139 (RVMIIDDDAK…VMARLWRVVA (126 aa)). A 4-aspartylphosphate modification is found at Asp-67. Residues 193–220 (RQLTINVVDDGNRGSGSGGGGGGGADAN) are disordered. A compositionally biased stretch (gly residues) spans 205–217 (RGSGSGGGGGGGA).

It belongs to the ARR family. Type-B subfamily. Two-component system major event consists of a His-to-Asp phosphorelay between a sensor histidine kinase (HK) and a response regulator (RR). In plants, the His-to-Asp phosphorelay involves an additional intermediate named Histidine-containing phosphotransfer protein (HPt). This multistep phosphorelay consists of a His-Asp-His-Asp sequential transfer of a phosphate group between first a His and an Asp of the HK protein, followed by the transfer to a conserved His of the HPt protein and finally the transfer to an Asp in the receiver domain of the RR protein.

Functionally, functions as a response regulator involved in His-to-Asp phosphorelay signal transduction system. Phosphorylation of the Asp residue in the receiver domain activates the ability of the protein to promote the transcription of target genes. May directly activate some type-A response regulators in response to cytokinins. This chain is Two-component response regulator ORR33, found in Oryza sativa subsp. indica (Rice).